The chain runs to 689 residues: MSEKTFLVEIGTEELPPKALRSLAESFAANFTAELDNAGLAHGTVQWFAAPRRLALKVANLAEAQPDREIEKRGPAIAQAFDAEGKPSKAAEGWARGCGITVDQAERLTTDKGEWLLYRAHVKGESTEALLPNMVATSLAKLPIPKLMRWGASDVHFVRPVHTVTLLLGDKVIPATILGIQSDRVIRGHRFMGESEFTIDNADQYPEILRERGKVIADYEERKAKIKADAEEAARKIGGNADLSESLLEEVASLVEWPVVLTAKFEEKFLAVPSEALVYTMKGDQKYFPVYANDGKLLPNFIFVANIESKDPQQIISGNEKVVRPRLADAEFFFNTDRKKRLEDNLPRLQTVLFQQQLGTLRDKTDRIQALAGWIAEQIGADVNHATRAGLLSKCDLMTNMVFEFTDTQGVMGMHYARHDGEAEDVAVALNEQYQPRFAGDDLPSNPVACALAIADKMDTLAGIFGIGQHPKGDKDPFALRRAALGVLRIIVEKNLNLDLQTLTEEAVRLYGDKLTNANVVDDVIDFMLGRFRAWYQDEGYTVDTIQAVLARRPTRPADFDARMKAVSHFRTLDAAAALAAANKRVSNILAKSDEVLSDRVNASTLKEPEEIKLAMQVVVLRDKLEPYFAEGRYQDALVELAELREPVDAFFDKVMVMVDDKELRINRLTMLEKLRELFLRVADISLLQ.

This sequence belongs to the class-II aminoacyl-tRNA synthetase family. Tetramer of two alpha and two beta subunits.

It localises to the cytoplasm. The catalysed reaction is tRNA(Gly) + glycine + ATP = glycyl-tRNA(Gly) + AMP + diphosphate. This chain is Glycine--tRNA ligase beta subunit, found in Escherichia coli O7:K1 (strain IAI39 / ExPEC).